A 182-amino-acid chain; its full sequence is Adenine phosphoribosyltransferase (182 aa).

Belongs to the purine/pyrimidine phosphoribosyltransferase family. Homodimer.

It is found in the cytoplasm. The enzyme catalyses AMP + diphosphate = 5-phospho-alpha-D-ribose 1-diphosphate + adenine. Its pathway is purine metabolism; AMP biosynthesis via salvage pathway; AMP from adenine: step 1/1. Catalyzes a salvage reaction resulting in the formation of AMP, that is energically less costly than de novo synthesis. The polypeptide is Adenine phosphoribosyltransferase (Campylobacter jejuni subsp. doylei (strain ATCC BAA-1458 / RM4099 / 269.97)).